The chain runs to 238 residues: Tetrahydromethanopterin S-methyltransferase subunit A 1 (238 aa).

Topologically, residues 2-218 are cytoplasmic; sequence VEKKSPAEGW…RMFAGMYSGK (217 aa). His84 contributes to the 5-hydroxybenzimidazolylcob(I)amide binding site. The chain crosses the membrane as a helical span at residues 219-237; that stretch reads VQGIMIGLAFTLTLGILLL. Val238 is a topological domain (extracellular).

The protein belongs to the MtrA family. In terms of assembly, the complex is composed of 8 subunits; MtrA, MtrB, MtrC, MtrD, MtrE, MtrF, MtrG and MtrH. 5-hydroxybenzimidazolylcob(I)amide is required as a cofactor.

It is found in the cell membrane. The enzyme catalyses 5-methyl-5,6,7,8-tetrahydromethanopterin + coenzyme M + 2 Na(+)(in) = 5,6,7,8-tetrahydromethanopterin + methyl-coenzyme M + 2 Na(+)(out). Its pathway is one-carbon metabolism; methanogenesis from CO(2); methyl-coenzyme M from 5,10-methylene-5,6,7,8-tetrahydromethanopterin: step 2/2. Part of a complex that catalyzes the formation of methyl-coenzyme M and tetrahydromethanopterin from coenzyme M and methyl-tetrahydromethanopterin. This is an energy-conserving, sodium-ion translocating step. The chain is Tetrahydromethanopterin S-methyltransferase subunit A 1 from Methanothermobacter marburgensis (strain ATCC BAA-927 / DSM 2133 / JCM 14651 / NBRC 100331 / OCM 82 / Marburg) (Methanobacterium thermoautotrophicum).